The sequence spans 737 residues: Dipeptidyl peptidase 3 (737 aa).

At A2 the chain carries N-acetylalanine. Residue H450 participates in Zn(2+) binding. E451 is an active-site residue. Zn(2+) contacts are provided by H455 and E508.

This sequence belongs to the peptidase M49 family. Zn(2+) serves as cofactor. As to expression, detected in placenta (at protein level). Detected in erythrocytes (at protein level).

The protein resides in the cytoplasm. It localises to the cytosol. It carries out the reaction Release of an N-terminal dipeptide from a peptide comprising four or more residues, with broad specificity. Also acts on dipeptidyl 2-naphthylamides.. Activated by Co(2+). Inhibited by EDTA and o-phenanthroline (in vitro). In terms of biological role, cleaves and degrades bioactive peptides, including angiotensin, Leu-enkephalin and Met-enkephalin. Also cleaves Arg-Arg-beta-naphthylamide (in vitro). In Homo sapiens (Human), this protein is Dipeptidyl peptidase 3 (DPP3).